We begin with the raw amino-acid sequence, 180 residues long: uncharacterized protein (180 aa).

An N-acetyltransferase domain is found at 31 to 180; it reads LLVRTAEWLR…HLFEKEITAE (150 aa).

It belongs to the acetyltransferase family.

This is an uncharacterized protein from Bacillus subtilis (strain 168).